The chain runs to 598 residues: Dihydroxy-acid dehydratase, mitochondrial (598 aa).

The N-terminal 18 residues, 1–18 (MMFCKLLRCQNGIASKRA), are a transit peptide targeting the mitochondrion. Cysteine 84 provides a ligand contact to [2Fe-2S] cluster. Residue aspartate 116 coordinates Mg(2+). Cysteine 157 serves as a coordination point for [2Fe-2S] cluster. Residue aspartate 158 participates in Mg(2+) binding. Cysteine 232 provides a ligand contact to [2Fe-2S] cluster. Mg(2+) is bound at residue glutamate 485. The active-site Proton acceptor is serine 511.

This sequence belongs to the IlvD/Edd family. Requires [2Fe-2S] cluster as cofactor. It depends on Mg(2+) as a cofactor.

The protein resides in the mitochondrion. It carries out the reaction (2R)-2,3-dihydroxy-3-methylbutanoate = 3-methyl-2-oxobutanoate + H2O. It catalyses the reaction (2R,3R)-2,3-dihydroxy-3-methylpentanoate = (S)-3-methyl-2-oxopentanoate + H2O. The protein operates within amino-acid biosynthesis; L-isoleucine biosynthesis; L-isoleucine from 2-oxobutanoate: step 3/4. It participates in amino-acid biosynthesis; L-valine biosynthesis; L-valine from pyruvate: step 3/4. Its function is as follows. Dihydroxyacid dehydratase that catalyzes the third step in the common pathway leading to biosynthesis of branched-chain amino acids. Catalyzes the dehydration of (2R,3R)-2,3-dihydroxy-3-methylpentanoate (2,3-dihydroxy-3-methylvalerate) into 2-oxo-3-methylpentanoate (2-oxo-3-methylvalerate) and of (2R)-2,3-dihydroxy-3-methylbutanoate (2,3-dihydroxyisovalerate) into 2-oxo-3-methylbutanoate (2-oxoisovalerate), the penultimate precursor to L-isoleucine and L-valine, respectively. In Schizosaccharomyces pombe (strain 972 / ATCC 24843) (Fission yeast), this protein is Dihydroxy-acid dehydratase, mitochondrial.